Here is a 263-residue protein sequence, read N- to C-terminus: Diphthine synthase (263 aa).

Residues L9, D84, M87, 112 to 113 (SI), L164, A207, and H232 each bind S-adenosyl-L-methionine.

This sequence belongs to the diphthine synthase family. In terms of assembly, homodimer.

The enzyme catalyses 2-[(3S)-amino-3-carboxypropyl]-L-histidyl-[translation elongation factor 2] + 3 S-adenosyl-L-methionine = diphthine-[translation elongation factor 2] + 3 S-adenosyl-L-homocysteine + 3 H(+). Its pathway is protein modification; peptidyl-diphthamide biosynthesis. Its function is as follows. S-adenosyl-L-methionine-dependent methyltransferase that catalyzes the trimethylation of the amino group of the modified target histidine residue in translation elongation factor 2 (EF-2), to form an intermediate called diphthine. The three successive methylation reactions represent the second step of diphthamide biosynthesis. In Methanosphaera stadtmanae (strain ATCC 43021 / DSM 3091 / JCM 11832 / MCB-3), this protein is Diphthine synthase.